The sequence spans 470 residues: uncharacterized protein (470 aa).

Residues 1–69 (MTRYQHLATL…PRSGYFVAQR (69 aa)) enclose the HTH gntR-type domain. Residue Lys313 is modified to N6-(pyridoxal phosphate)lysine.

It in the C-terminal section; belongs to the class-I pyridoxal-phosphate-dependent aminotransferase family.

This is an uncharacterized protein from Escherichia coli (strain K12).